Consider the following 82-residue polypeptide: Large ribosomal subunit protein bL27 (82 aa).

The interval Met-1–Tyr-20 is disordered. Polar residues predominate over residues Ala-7–Gln-19.

The protein belongs to the bacterial ribosomal protein bL27 family.

The polypeptide is Large ribosomal subunit protein bL27 (Bifidobacterium longum (strain NCC 2705)).